Consider the following 825-residue polypeptide: Taste receptor cell protein 1 (825 aa).

An N-terminal signal peptide occupies residues 1-21; that stretch reads MDKQWFPAAGILLAALLVVSA. Disordered stretches follow at residues 66–97 and 299–322; these read EREP…GPSG and TSPS…SASP. A compositionally biased stretch (low complexity) spans 302 to 322; it reads SQASSLHSPRPSSASPLSASP.

As to expression, expression is restricted to circumvallate papillae.

This Mus musculus (Mouse) protein is Taste receptor cell protein 1 (Trcg1).